A 179-amino-acid chain; its full sequence is MEQYRGTTILSIRRGNQVVIGGDGQVSLGNTIMKGNARKVRRLYKNQVIAGFAGGTADAFTLFERFEAKLESHGGQLVRAAVELAKDWRTDRALRRLEALLAVADKEASLIITGNGDVIQPEDDLIAIGSGGAFAQSAARALLDNTELSAREIVQKGLTIAGDICIYTNHNQTIEELEY.

Residue Thr7 is part of the active site. Na(+)-binding residues include Gly162, Cys165, and Thr168.

It belongs to the peptidase T1B family. HslV subfamily. As to quaternary structure, a double ring-shaped homohexamer of HslV is capped on each side by a ring-shaped HslU homohexamer. The assembly of the HslU/HslV complex is dependent on binding of ATP.

The protein resides in the cytoplasm. It carries out the reaction ATP-dependent cleavage of peptide bonds with broad specificity.. Its activity is regulated as follows. Allosterically activated by HslU binding. In terms of biological role, protease subunit of a proteasome-like degradation complex believed to be a general protein degrading machinery. The protein is ATP-dependent protease subunit HslV of Teredinibacter turnerae (strain ATCC 39867 / T7901).